The following is a 328-amino-acid chain: Biotin synthase (328 aa).

The region spanning 48-275 is the Radical SAM core domain; sequence NRIQLSKLLN…KSHVRLTAGR (228 aa). [4Fe-4S] cluster contacts are provided by C63, C67, and C70. 4 residues coordinate [2Fe-2S] cluster: C107, C138, C198, and R270.

It belongs to the radical SAM superfamily. Biotin synthase family. As to quaternary structure, homodimer. The cofactor is [4Fe-4S] cluster. [2Fe-2S] cluster is required as a cofactor.

The enzyme catalyses (4R,5S)-dethiobiotin + (sulfur carrier)-SH + 2 reduced [2Fe-2S]-[ferredoxin] + 2 S-adenosyl-L-methionine = (sulfur carrier)-H + biotin + 2 5'-deoxyadenosine + 2 L-methionine + 2 oxidized [2Fe-2S]-[ferredoxin]. It participates in cofactor biosynthesis; biotin biosynthesis; biotin from 7,8-diaminononanoate: step 2/2. Its function is as follows. Catalyzes the conversion of dethiobiotin (DTB) to biotin by the insertion of a sulfur atom into dethiobiotin via a radical-based mechanism. The sequence is that of Biotin synthase from Brucella ovis (strain ATCC 25840 / 63/290 / NCTC 10512).